A 245-amino-acid chain; its full sequence is 1-(5-phosphoribosyl)-5-[(5-phosphoribosylamino)methylideneamino] imidazole-4-carboxamide isomerase (245 aa).

The active-site Proton acceptor is D7. The Proton donor role is filled by D129.

This sequence belongs to the HisA/HisF family.

The protein resides in the cytoplasm. It catalyses the reaction 1-(5-phospho-beta-D-ribosyl)-5-[(5-phospho-beta-D-ribosylamino)methylideneamino]imidazole-4-carboxamide = 5-[(5-phospho-1-deoxy-D-ribulos-1-ylimino)methylamino]-1-(5-phospho-beta-D-ribosyl)imidazole-4-carboxamide. The protein operates within amino-acid biosynthesis; L-histidine biosynthesis; L-histidine from 5-phospho-alpha-D-ribose 1-diphosphate: step 4/9. In Klebsiella pneumoniae subsp. pneumoniae (strain ATCC 700721 / MGH 78578), this protein is 1-(5-phosphoribosyl)-5-[(5-phosphoribosylamino)methylideneamino] imidazole-4-carboxamide isomerase.